Here is a 358-residue protein sequence, read N- to C-terminus: Small ribosomal subunit biogenesis GTPase RsgA (358 aa).

The CP-type G domain occupies 76-234 (STEIDRPAVA…LADSPGFNQP (159 aa)). Residues 125–128 (NKID) and 176–184 (GPSGVGKSS) contribute to the GTP site. The Zn(2+) site is built by C259, C264, H266, and C272. Residues 319 to 358 (TYEPKLANKKYRRPSRRGKNQDQERYENKTLQDIYNDDSE) are disordered. Basic residues predominate over residues 325-336 (ANKKYRRPSRRG). Basic and acidic residues predominate over residues 337–348 (KNQDQERYENKT).

This sequence belongs to the TRAFAC class YlqF/YawG GTPase family. RsgA subfamily. As to quaternary structure, monomer. Associates with 30S ribosomal subunit, binds 16S rRNA. The cofactor is Zn(2+).

The protein resides in the cytoplasm. Its function is as follows. One of several proteins that assist in the late maturation steps of the functional core of the 30S ribosomal subunit. Helps release RbfA from mature subunits. May play a role in the assembly of ribosomal proteins into the subunit. Circularly permuted GTPase that catalyzes slow GTP hydrolysis, GTPase activity is stimulated by the 30S ribosomal subunit. The polypeptide is Small ribosomal subunit biogenesis GTPase RsgA (Microcystis aeruginosa (strain NIES-843 / IAM M-2473)).